The following is a 388-amino-acid chain: Processive diacylglycerol beta-glucosyltransferase (388 aa).

The protein belongs to the glycosyltransferase 28 family. UgtP subfamily.

Its subcellular location is the cell membrane. The catalysed reaction is a 1,2-diacyl-3-O-(beta-D-glucopyranosyl)-sn-glycerol + UDP-alpha-D-glucose = a 1,2-diacyl-3-O-(beta-D-Glc-(1-&gt;6)-beta-D-Glc)-sn-glycerol + UDP + H(+). It catalyses the reaction a 1,2-diacyl-3-O-(beta-D-Glc-(1-&gt;6)-beta-D-Glc)-sn-glycerol + UDP-alpha-D-glucose = a 1,2-diacyl-3-O-(beta-D-Glc-(1-&gt;6)-beta-D-Glc-(1-&gt;6)-beta-D-Glc)-sn-glycerol + UDP + H(+). The enzyme catalyses a 1,2-diacyl-sn-glycerol + UDP-alpha-D-glucose = a 1,2-diacyl-3-O-(beta-D-glucopyranosyl)-sn-glycerol + UDP + H(+). Its pathway is glycolipid metabolism; diglucosyl-diacylglycerol biosynthesis. Functionally, processive glucosyltransferase involved in the biosynthesis of both the bilayer- and non-bilayer-forming membrane glucolipids. Is able to successively transfer up to three glucosyl residues to diacylglycerol (DAG), thereby catalyzing the formation of beta-monoglucosyl-DAG (3-O-(beta-D-glucopyranosyl)-1,2-diacyl-sn-glycerol), beta-diglucosyl-DAG (3-O-(beta-D-glucopyranosyl-beta-(1-&gt;6)-D-glucopyranosyl)-1,2-diacyl-sn-glycerol) and beta-triglucosyl-DAG (3-O-(beta-D-glucopyranosyl-beta-(1-&gt;6)-D-glucopyranosyl-beta-(1-&gt;6)-D-glucopyranosyl)-1,2-diacyl-sn-glycerol). Beta-diglucosyl-DAG is the predominant glycolipid found in Bacillales and is also used as a membrane anchor for lipoteichoic acid (LTA). The sequence is that of Processive diacylglycerol beta-glucosyltransferase from Bacillus thuringiensis (strain Al Hakam).